A 290-amino-acid chain; its full sequence is Succinate dehydrogenase [ubiquinone] iron-sulfur subunit, mitochondrial (290 aa).

The transit peptide at 1 to 38 directs the protein to the mitochondrion; it reads MAAAVVGVSLRRGVPARFLRAGLRPVRGLEAVHGICRG. One can recognise a 2Fe-2S ferredoxin-type domain in the interval 50 to 143; it reads KKFSIYRWDP…TTKIYPLPHM (94 aa). Residues Cys103, Cys108, Cys111, and Cys123 each contribute to the [2Fe-2S] cluster site. Positions 186-216 constitute a 4Fe-4S ferredoxin-type domain; that stretch reads DRQKLDGLYECILCACCSTSCPSYWWNGDKY. [4Fe-4S] cluster is bound by residues Cys196, Cys199, and Cys202. Residue Cys206 coordinates [3Fe-4S] cluster. Trp211 is an a ubiquinone binding site. Cys253 and Cys259 together coordinate [3Fe-4S] cluster. Cys263 serves as a coordination point for [4Fe-4S] cluster.

The protein belongs to the succinate dehydrogenase/fumarate reductase iron-sulfur protein family. As to quaternary structure, component of complex II composed of four subunits: the flavoprotein (FP) SDHA, iron-sulfur protein (IP) SDHB, and a cytochrome b560 composed of SDHC and SDHD. [2Fe-2S] cluster is required as a cofactor. [3Fe-4S] cluster serves as cofactor. The cofactor is [4Fe-4S] cluster.

The protein resides in the mitochondrion inner membrane. It carries out the reaction a quinone + succinate = fumarate + a quinol. The enzyme catalyses (R)-malate + a quinone = enol-oxaloacetate + a quinol. The catalysed reaction is (S)-malate + a quinone = enol-oxaloacetate + a quinol. It participates in carbohydrate metabolism; tricarboxylic acid cycle; fumarate from succinate (eukaryal route): step 1/1. Enol-oxaloacetate inhibits the succinate dehydrogenase activity. Iron-sulfur protein (IP) subunit of the succinate dehydrogenase complex (mitochondrial respiratory chain complex II), responsible for transferring electrons from succinate to ubiquinone (coenzyme Q). SDH also oxidizes malate to the non-canonical enol form of oxaloacetate, enol-oxaloacetate. Enol-oxaloacetate, which is a potent inhibitor of the succinate dehydrogenase activity, is further isomerized into keto-oxaloacetate. In Gallus gallus (Chicken), this protein is Succinate dehydrogenase [ubiquinone] iron-sulfur subunit, mitochondrial (SDHB).